We begin with the raw amino-acid sequence, 283 residues long: Pantothenate synthetase (283 aa).

30–37 (MGNLHAGH) provides a ligand contact to ATP. The active-site Proton donor is the His-37. Gln-61 serves as a coordination point for (R)-pantoate. Position 61 (Gln-61) interacts with beta-alanine. ATP is bound at residue 149 to 152 (GEKD). Gln-155 provides a ligand contact to (R)-pantoate. Residues Leu-178 and 186 to 189 (MSSR) each bind ATP.

This sequence belongs to the pantothenate synthetase family. Homodimer.

Its subcellular location is the cytoplasm. It catalyses the reaction (R)-pantoate + beta-alanine + ATP = (R)-pantothenate + AMP + diphosphate + H(+). It functions in the pathway cofactor biosynthesis; (R)-pantothenate biosynthesis; (R)-pantothenate from (R)-pantoate and beta-alanine: step 1/1. Catalyzes the condensation of pantoate with beta-alanine in an ATP-dependent reaction via a pantoyl-adenylate intermediate. The sequence is that of Pantothenate synthetase from Hahella chejuensis (strain KCTC 2396).